The sequence spans 600 residues: NADH-quinone oxidoreductase subunit C/D (600 aa).

The segment at 1–190 (MVNNMTDLTA…DPFELTKAKQ (190 aa)) is NADH dehydrogenase I subunit C. Residues 214–600 (DFMFLNLGPN…IDFVMSDVDR (387 aa)) form an NADH dehydrogenase I subunit D region.

The protein in the N-terminal section; belongs to the complex I 30 kDa subunit family. This sequence in the C-terminal section; belongs to the complex I 49 kDa subunit family. In terms of assembly, NDH-1 is composed of 13 different subunits. Subunits NuoB, CD, E, F, and G constitute the peripheral sector of the complex.

Its subcellular location is the cell inner membrane. It catalyses the reaction a quinone + NADH + 5 H(+)(in) = a quinol + NAD(+) + 4 H(+)(out). In terms of biological role, NDH-1 shuttles electrons from NADH, via FMN and iron-sulfur (Fe-S) centers, to quinones in the respiratory chain. The immediate electron acceptor for the enzyme in this species is believed to be ubiquinone. Couples the redox reaction to proton translocation (for every two electrons transferred, four hydrogen ions are translocated across the cytoplasmic membrane), and thus conserves the redox energy in a proton gradient. This chain is NADH-quinone oxidoreductase subunit C/D, found in Citrobacter koseri (strain ATCC BAA-895 / CDC 4225-83 / SGSC4696).